The sequence spans 699 residues: SPS-sensor serine protease component SSY5 (699 aa).

Disordered regions lie at residues 1-113 (MVRF…LQGF) and 128-158 (PVKE…ENAR). Residues 1-381 (MVRFFGLNKK…YCVKDYIKKA (381 aa)) constitute a propeptide that is removed on maturation. Polar residues predominate over residues 24–38 (NEQNAAETSSSNVSG). The segment covering 39–51 (NEERIDPNSHDTN) has biased composition (basic and acidic residues). Positions 61–78 (STTFGSSIQSSSIFSRGR) are enriched in low complexity. Polar residues predominate over residues 83-93 (TGASSSMATSE). 2 stretches are compositionally biased toward low complexity: residues 97–109 (HSSG…NSKN) and 144–154 (SSSTSSTLATS). Positions 459 to 699 (FAITCAHVVL…QWDIDPQLDG (241 aa)) are serine protease. Residues histidine 465, aspartate 545, and serine 640 each act as charge relay system in the active site.

Belongs to the peptidase S64 family. As to quaternary structure, component of the plasma membrane SPS (SSY1-PTR3-SSY5) amino acid sensor complex. The propeptide is autoproteolytically cleaved from the catalytic domain but remains associated, forming an inactive protease complex. This processing occurs even in the absence of signaling.

It is found in the cell membrane. In terms of biological role, protease component of the SPS-sensor system, which regulates the expression of several amino acid-metabolizing enzymes and amino acid- and peptide-permeases in response to extracellular amino acid levels by controlling the activity of two transcription factors, STP1 and STP2. Catalyzes the activation of these transcription factors, which are synthesized as latent cytoplasmic precursors, by proteolytic removal of an N-terminal inhibitory domain containing cytoplasmic retention motifs. SSY5 binds as an inactive protease complex to STP1. In response to extracellular amino acids and dependent on the other SPS-sensor components, the inhibitory propeptide is induced to dissociate, and thereby enables the catalytic domain to process STP1. The polypeptide is SPS-sensor serine protease component SSY5 (SSY5) (Saccharomyces cerevisiae (strain ATCC 204508 / S288c) (Baker's yeast)).